We begin with the raw amino-acid sequence, 403 residues long: Synaptotagmin-7 (403 aa).

Topologically, residues M1–D16 are vesicular. A helical membrane pass occupies residues V17 to L37. Residues C38–A403 lie on the Cytoplasmic side of the membrane. S52 bears the Phosphoserine mark. Residues L53–S103 are disordered. T58 bears the Phosphothreonine mark. S61 bears the Phosphoserine mark. Over residues P90–T100 the composition is skewed to basic and acidic residues. Phosphoserine occurs at positions 119 and 122. C2 domains lie at N135–K255 and S266–H399. D166 lines the Ca(2+) pocket. G169 and S171 each carry asymmetric dimethylarginine. Positions 172, 225, 227, 230, 233, 297, 303, 357, 359, 362, and 365 each coordinate Ca(2+).

The protein belongs to the synaptotagmin family. As to quaternary structure, homodimer. Can also form heterodimers with SYT6, SYT9 and SYT10. Interacts with calmodulin (CALM1, CALM2 or CALM3). Interacts with CD63; required for localization to lysosomes. Interacts with APP. Requires Ca(2+) as cofactor. Post-translationally, palmitoylated at its vesicular N-terminus; palmitoylation is required for localization to lysosome and phagocytosis in macrophages. As to expression, widely expressed. Expressed in insulin-secreting cells. Present in glucagon-secreting cells (at protein level).

The protein resides in the cell membrane. It is found in the presynaptic cell membrane. The protein localises to the cytoplasmic vesicle. It localises to the secretory vesicle. Its subcellular location is the synaptic vesicle membrane. The protein resides in the lysosome membrane. It is found in the phagosome membrane. The protein localises to the peroxisome membrane. It localises to the secretory vesicle membrane. Ca(2+) sensor involved in Ca(2+)-dependent exocytosis of secretory and synaptic vesicles through Ca(2+) and phospholipid binding to the C2 domain. Ca(2+) induces binding of the C2-domains to phospholipid membranes and to assembled SNARE-complexes; both actions contribute to triggering exocytosis. SYT7 binds Ca(2+) with high affinity and slow kinetics compared to other synaptotagmins. Involved in Ca(2+)-triggered lysosomal exocytosis, a major component of the plasma membrane repair. Ca(2+)-regulated delivery of lysosomal membranes to the cell surface is also involved in the phagocytic uptake of particles by macrophages. Ca(2+)-triggered lysosomal exocytosis also plays a role in bone remodeling by regulating secretory pathways in osteoclasts and osteoblasts. Involved in cholesterol transport from lysosome to peroxisome by promoting membrane contacts between lysosomes and peroxisomes: probably acts by promoting vesicle fusion by binding phosphatidylinositol-4,5-bisphosphate on peroxisomal membranes. Acts as a key mediator of synaptic facilitation, a process also named short-term synaptic potentiation: synaptic facilitation takes place at synapses with a low initial release probability and is caused by influx of Ca(2+) into the axon terminal after spike generation, increasing the release probability of neurotransmitters. Probably mediates synaptic facilitation by directly increasing the probability of release. May also contribute to synaptic facilitation by regulating synaptic vesicle replenishment, a process required to ensure that synaptic vesicles are ready for the arrival of the next action potential: SYT7 is required for synaptic vesicle replenishment by acting as a sensor for Ca(2+) and by forming a complex with calmodulin. Also acts as a regulator of Ca(2+)-dependent insulin and glucagon secretion in beta-cells. Triggers exocytosis by promoting fusion pore opening and fusion pore expansion in chromaffin cells. Also regulates the secretion of some non-synaptic secretory granules of specialized cells. The polypeptide is Synaptotagmin-7 (Mus musculus (Mouse)).